Reading from the N-terminus, the 516-residue chain is Probable rhamnogalacturonase B (516 aa).

Positions 1 to 21 are cleaved as a signal peptide; sequence MRLHAFTLLSLLGLVPSFAAA. Cys-42 and Cys-68 form a disulfide bridge. A glycan (N-linked (GlcNAc...) asparagine) is linked at Asn-145. The Proton donor role is filled by Asp-219. A disulfide bridge connects residues Cys-221 and Cys-238. The N-linked (GlcNAc...) asparagine glycan is linked to Asn-239. His-294 is an active-site residue. N-linked (GlcNAc...) asparagine glycosylation is present at Asn-321. Intrachain disulfides connect Cys-344/Cys-350 and Cys-372/Cys-381. The interval 462 to 516 is disordered; that stretch reads ETPAAASRSEQVVQGASQETSQPAPESAGPVRSVPTGGNRPSRHRHGHHHFWIAA. The span at 469-485 shows a compositional bias: polar residues; it reads RSEQVVQGASQETSQPA. Positions 502–516 are enriched in basic residues; the sequence is PSRHRHGHHHFWIAA.

Belongs to the glycosyl hydrolase 28 family.

Its subcellular location is the secreted. The enzyme catalyses Endohydrolysis of alpha-D-GalA-(1-&gt;2)-alpha-L-Rha glycosidic bond in the rhamnogalacturonan I backbone with initial inversion of anomeric configuration releasing oligosaccharides with beta-D-GalA at the reducing end.. Its function is as follows. Pectinolytic enzymes consist of four classes of enzymes: pectine lyase, polygalacturonase, pectin methylesterase and rhamnogalacturonase. Hydrolyzes alpha-D-galacturonopyranosyl-(1,2)-alpha-L-rhamnopyranosyl linkages in the backbone of the hairy regions of pectins. In Neosartorya fischeri (strain ATCC 1020 / DSM 3700 / CBS 544.65 / FGSC A1164 / JCM 1740 / NRRL 181 / WB 181) (Aspergillus fischerianus), this protein is Probable rhamnogalacturonase B (rhgB).